Here is a 216-residue protein sequence, read N- to C-terminus: Large ribosomal subunit protein uL3 (216 aa).

Positions 132–155 (QDASHGNSRSHRVPGSIGQNQTPG) are disordered. Residue Q152 is modified to N5-methylglutamine.

The protein belongs to the universal ribosomal protein uL3 family. In terms of assembly, part of the 50S ribosomal subunit. Forms a cluster with proteins L14 and L19. In terms of processing, methylated by PrmB.

Its function is as follows. One of the primary rRNA binding proteins, it binds directly near the 3'-end of the 23S rRNA, where it nucleates assembly of the 50S subunit. The protein is Large ribosomal subunit protein uL3 of Legionella pneumophila (strain Paris).